The chain runs to 65 residues: Potassium channel toxin kappa-KTx 2.6 (65 aa).

Residues 1–27 form the signal peptide; the sequence is MKTSKMICAFLLVLVVGTFNDISGAYG. Positions 28–39 are excised as a propeptide; it reads EYVEDQHSFKIE. Intrachain disulfides connect Cys45–Cys63 and Cys49–Cys59.

It belongs to the short scorpion toxin superfamily. Potassium channel inhibitor kappa-KTx family. Kappa-KTx 2 subfamily. As to expression, expressed by the venom gland.

Its subcellular location is the secreted. Functionally, potassium channel inhibitor (Kv). This Opisthacanthus cayaporum (South American scorpion) protein is Potassium channel toxin kappa-KTx 2.6.